The primary structure comprises 122 residues: Small ribosomal subunit protein uS13 (122 aa).

Positions 93–122 are disordered; it reads RRGLPVRGQNTKTNARTRKGPKRTAGGKKK. A compositionally biased stretch (basic residues) spans 107 to 122; sequence ARTRKGPKRTAGGKKK.

It belongs to the universal ribosomal protein uS13 family. Part of the 30S ribosomal subunit. Forms a loose heterodimer with protein S19. Forms two bridges to the 50S subunit in the 70S ribosome.

Its function is as follows. Located at the top of the head of the 30S subunit, it contacts several helices of the 16S rRNA. In the 70S ribosome it contacts the 23S rRNA (bridge B1a) and protein L5 of the 50S subunit (bridge B1b), connecting the 2 subunits; these bridges are implicated in subunit movement. Contacts the tRNAs in the A and P-sites. This is Small ribosomal subunit protein uS13 from Syntrophomonas wolfei subsp. wolfei (strain DSM 2245B / Goettingen).